A 125-amino-acid chain; its full sequence is Small ribosomal subunit protein uS12m (125 aa).

A disordered region spans residues 1–24 (MPTSNQSIRHGREKKRRTDRTRAL). The span at 9-19 (RHGREKKRRTD) shows a compositional bias: basic residues.

This sequence belongs to the universal ribosomal protein uS12 family.

The protein resides in the mitochondrion. Its function is as follows. Protein S12 is involved in the translation initiation step. This is Small ribosomal subunit protein uS12m (RPS12) from Pinus sylvestris (Scotch pine).